A 108-amino-acid chain; its full sequence is uncharacterized protein (108 aa).

2 helical membrane passes run 32-52 and 68-88; these read YFFFLLFCKLLNAAEAPLLAI and SYLLLLITMLEGAEYFSLVVG.

The protein resides in the membrane. This is an uncharacterized protein from Saccharomyces cerevisiae (strain ATCC 204508 / S288c) (Baker's yeast).